Here is a 324-residue protein sequence, read N- to C-terminus: HPr kinase/phosphorylase (324 aa).

Residues His146 and Lys167 contribute to the active site. Position 161–168 (161–168 (GDSGLGKS)) interacts with ATP. Ser168 is a binding site for Mg(2+). The active-site Proton acceptor; for phosphorylation activity. Proton donor; for dephosphorylation activity is the Asp185. Residues 209 to 218 (LEVRGLGLLD) are important for the catalytic mechanism of both phosphorylation and dephosphorylation. Glu210 is a binding site for Mg(2+). The active site involves Arg250. The segment at 271–276 (QVAAGR) is important for the catalytic mechanism of dephosphorylation.

The protein belongs to the HPrK/P family. As to quaternary structure, homohexamer. The cofactor is Mg(2+).

The enzyme catalyses [HPr protein]-L-serine + ATP = [HPr protein]-O-phospho-L-serine + ADP + H(+). The catalysed reaction is [HPr protein]-O-phospho-L-serine + phosphate + H(+) = [HPr protein]-L-serine + diphosphate. Its function is as follows. Catalyzes the ATP- as well as the pyrophosphate-dependent phosphorylation of a specific serine residue in HPr, a phosphocarrier protein of the phosphoenolpyruvate-dependent sugar phosphotransferase system (PTS). HprK/P also catalyzes the pyrophosphate-producing, inorganic phosphate-dependent dephosphorylation (phosphorolysis) of seryl-phosphorylated HPr (P-Ser-HPr). The protein is HPr kinase/phosphorylase of Ralstonia nicotianae (strain ATCC BAA-1114 / GMI1000) (Ralstonia solanacearum).